The chain runs to 474 residues: Vitamin D-binding protein (474 aa).

Residues 1 to 16 (MKRILVFLLAVAFVHA) form the signal peptide. Albumin domains follow at residues 17–208 (LERG…QLKH), 209–393 (FSLL…QLTR), and 394–474 (ELSS…TLQS). Disulfide bonds link cysteine 29–cysteine 75 and cysteine 74–cysteine 83. Asparagine 86 carries N-linked (GlcNAc...) asparagine glycosylation. Intrachain disulfides connect cysteine 96-cysteine 112, cysteine 111-cysteine 122, cysteine 145-cysteine 190, cysteine 189-cysteine 198, cysteine 220-cysteine 266, cysteine 265-cysteine 273, cysteine 285-cysteine 299, cysteine 298-cysteine 310, cysteine 334-cysteine 375, cysteine 374-cysteine 383, cysteine 406-cysteine 452, and cysteine 451-cysteine 461. N-linked (GlcNAc...) asparagine glycosylation occurs at asparagine 287.

It belongs to the ALB/AFP/VDB family. Associates with membrane-bound immunoglobulin on the surface of B-lymphocytes and with IgG Fc receptor on the membranes of T-lymphocytes. Interacts with LRP2; the interaction is required for renal uptake of GC in complex with 25-hydroxyvitamin D3.

Its subcellular location is the secreted. In terms of biological role, involved in vitamin D transport and storage, scavenging of extracellular G-actin, enhancement of the chemotactic activity of C5 alpha for neutrophils in inflammation and macrophage activation. The polypeptide is Vitamin D-binding protein (GC) (Bos taurus (Bovine)).